Here is a 1562-residue protein sequence, read N- to C-terminus: DNA-directed RNA polymerase subunit beta'' (1562 aa).

The segment at M1 to S22 is disordered. A compositionally biased stretch (polar residues) spans N11–S22. Zn(2+) contacts are provided by C275, C338, C345, and C348.

This sequence belongs to the RNA polymerase beta' chain family. RpoC2 subfamily. As to quaternary structure, in plastids the minimal PEP RNA polymerase catalytic core is composed of four subunits: alpha, beta, beta', and beta''. When a (nuclear-encoded) sigma factor is associated with the core the holoenzyme is formed, which can initiate transcription. Zn(2+) serves as cofactor.

The protein localises to the plastid. Its subcellular location is the chloroplast. The catalysed reaction is RNA(n) + a ribonucleoside 5'-triphosphate = RNA(n+1) + diphosphate. Its function is as follows. DNA-dependent RNA polymerase catalyzes the transcription of DNA into RNA using the four ribonucleoside triphosphates as substrates. This is DNA-directed RNA polymerase subunit beta'' from Chlorella vulgaris (Green alga).